The primary structure comprises 550 residues: Arginine--tRNA ligase (550 aa).

The short motif at 130 to 140 is the 'HIGH' region element; it reads ANPTGPIHIGG.

This sequence belongs to the class-I aminoacyl-tRNA synthetase family. As to quaternary structure, monomer.

The protein resides in the cytoplasm. It carries out the reaction tRNA(Arg) + L-arginine + ATP = L-arginyl-tRNA(Arg) + AMP + diphosphate. The sequence is that of Arginine--tRNA ligase from Mycolicibacterium paratuberculosis (strain ATCC BAA-968 / K-10) (Mycobacterium paratuberculosis).